The chain runs to 623 residues: Leucine aminopeptidase 2 (623 aa).

A peptide is bound by residues 136 to 138 (QCE) and 261 to 266 (PYGGME). Residue H290 coordinates Zn(2+). E291 serves as the catalytic Proton acceptor. The Zn(2+) site is built by H294 and E313. The Proton donor role is filled by Y391.

It belongs to the peptidase M1 family. Zn(2+) serves as cofactor.

It localises to the cytoplasm. Its subcellular location is the nucleus. The catalysed reaction is an epoxide + H2O = an ethanediol. Its function is as follows. Aminopeptidase that preferentially cleaves di- and tripeptides. Also has low epoxide hydrolase activity (in vitro). Can hydrolyze the epoxide leukotriene LTA(4) but it forms preferentially 5,6-dihydroxy-7,9,11,14-eicosatetraenoic acid rather than the cytokine leukotriene B(4) as the product compared to the homologous mammalian enzyme (in vitro). The protein is Leucine aminopeptidase 2 (LKH1) of Candida albicans (strain SC5314 / ATCC MYA-2876) (Yeast).